A 203-amino-acid polypeptide reads, in one-letter code: MSKQPLRVGIGGPVGSGKTTLTLSLCNALRNRYNVAVVTNDIYTEEDAQFLVRHQALAQERIIGVETGGCPHTAIREDASINLEAVAQLSQRFSDLDLILVESGGDNLAATFSPELSDLTLYVIDVAAGEKIPRKGGPGICKSDLLIINKTDLAPLVGASLEVMDRDARKMRGERPFLFSNLKSGEGLDQIIDFIERQGLFKT.

Position 12-19 (12-19 (GPVGSGKT)) interacts with GTP.

The protein belongs to the SIMIBI class G3E GTPase family. UreG subfamily. As to quaternary structure, homodimer. UreD, UreF and UreG form a complex that acts as a GTP-hydrolysis-dependent molecular chaperone, activating the urease apoprotein by helping to assemble the nickel containing metallocenter of UreC. The UreE protein probably delivers the nickel.

Its subcellular location is the cytoplasm. Its function is as follows. Facilitates the functional incorporation of the urease nickel metallocenter. This process requires GTP hydrolysis, probably effectuated by UreG. This is Urease accessory protein UreG from Nitrosococcus oceani (strain ATCC 19707 / BCRC 17464 / JCM 30415 / NCIMB 11848 / C-107).